Consider the following 476-residue polypeptide: Adenosylhomocysteinase (476 aa).

Substrate-binding residues include Thr67, Asp142, and Glu202. 203–205 (TTT) is an NAD(+) binding site. Residues Lys232 and Asp236 each contribute to the substrate site. NAD(+) contacts are provided by residues Asn237, 266–271 (GYGDVG), Glu289, Asn324, 345–347 (IGH), and Asn390.

The protein belongs to the adenosylhomocysteinase family. It depends on NAD(+) as a cofactor.

Its subcellular location is the cytoplasm. It catalyses the reaction S-adenosyl-L-homocysteine + H2O = L-homocysteine + adenosine. Its pathway is amino-acid biosynthesis; L-homocysteine biosynthesis; L-homocysteine from S-adenosyl-L-homocysteine: step 1/1. May play a key role in the regulation of the intracellular concentration of adenosylhomocysteine. In Prochlorococcus marinus (strain MIT 9313), this protein is Adenosylhomocysteinase.